A 475-amino-acid polypeptide reads, in one-letter code: Pup--protein ligase (475 aa).

Mg(2+) is bound at residue E19. R64 is a binding site for ATP. Position 66 (Y66) interacts with Mg(2+). Residue D68 is the Proton acceptor of the active site. E74 serves as a coordination point for Mg(2+). Residues T77 and W436 each contribute to the ATP site.

Belongs to the Pup ligase/Pup deamidase family. Pup-conjugating enzyme subfamily.

It catalyses the reaction ATP + [prokaryotic ubiquitin-like protein]-L-glutamate + [protein]-L-lysine = ADP + phosphate + N(6)-([prokaryotic ubiquitin-like protein]-gamma-L-glutamyl)-[protein]-L-lysine.. The protein operates within protein degradation; proteasomal Pup-dependent pathway. It functions in the pathway protein modification; protein pupylation. Catalyzes the covalent attachment of the prokaryotic ubiquitin-like protein modifier Pup to the proteasomal substrate proteins, thereby targeting them for proteasomal degradation. This tagging system is termed pupylation. The ligation reaction involves the side-chain carboxylate of the C-terminal glutamate of Pup and the side-chain amino group of a substrate lysine. In Corynebacterium aurimucosum (strain ATCC 700975 / DSM 44827 / CIP 107346 / CN-1) (Corynebacterium nigricans), this protein is Pup--protein ligase.